The following is a 461-amino-acid chain: Ribonuclease inhibitor (461 aa).

N-acetylserine is present on Ser2. Positions Ser2–Gln11 are 2 X 5 AA tandem repeats of S-L-D-I-Q. LRR repeat units follow at residues Trp20–Ile48, Ser49–Val76, Leu77–Leu105, Ser106–Leu133, Cys134–Leu162, Ala163–Leu190, Cys191–Leu219, Cys220–Leu247, Cys248–Leu276, Cys277–Leu304, Cys305–Phe333, Ser334–Leu361, Cys362–Leu390, Ala391–Leu418, and Val419–Leu447. Ser91 is modified (phosphoserine).

Forms high-affinity heterodimers with RNASE1, ANG and RNASE2.

Its subcellular location is the cytoplasm. It localises to the nucleus. Ribonuclease inhibitor which inhibits RNASE1, RNASE2 and angiogenin (ANG). May play a role in redox homeostasis. Required to inhibit the cytotoxic tRNA ribonuclease activity of ANG in the cytoplasm in absence of stress. Relocates to the nucleus in response to stress, relieving inhibition of ANG in the cytoplasm, and inhibiting the angiogenic activity of ANG in the nucleus. In Pan troglodytes (Chimpanzee), this protein is Ribonuclease inhibitor (RNH1).